The primary structure comprises 153 residues: Histone H2B.4 (153 aa).

2 stretches are compositionally biased toward basic and acidic residues: residues 1–10 (MAPKKDEKPA) and 20–54 (AKAEAKPKAEKAAKKAKKEPSKKAAKEPKGDGEKK). The interval 1–60 (MAPKKDEKPATAEAGAEAPAKAEAKPKAEKAAKKAKKEPSKKAAKEPKGDGEKKDKKKKK) is disordered. 2 positions are modified to N6-acetyllysine: lysine 41 and lysine 42. Lysine 149 is covalently cross-linked (Glycyl lysine isopeptide (Lys-Gly) (interchain with G-Cter in ubiquitin)).

This sequence belongs to the histone H2B family. The nucleosome is a histone octamer containing two molecules each of H2A, H2B, H3 and H4 assembled in one H3-H4 heterotetramer and two H2A-H2B heterodimers. The octamer wraps approximately 147 bp of DNA. The N-terminus is blocked. In terms of processing, can be acetylated to form H2BK33ac and H2BK34ac. Acetylated mainly on the ubiquitinated form. Post-translationally, monoubiquitinated to form H2BK143ub1; which is increased during the light period and may give a specific tag for epigenetic transcriptional activation.

The protein localises to the nucleus. It is found in the chromosome. In terms of biological role, core component of nucleosome. Nucleosomes wrap and compact DNA into chromatin, limiting DNA accessibility to the cellular machineries which require DNA as a template. Histones thereby play a central role in transcription regulation, DNA repair, DNA replication and chromosomal stability. DNA accessibility is regulated via a complex set of post-translational modifications of histones, also called histone code, and nucleosome remodeling. The protein is Histone H2B.4 of Chlamydomonas reinhardtii (Chlamydomonas smithii).